The chain runs to 639 residues: Ubiquitin-like modifier-activating enzyme ATG7 (639 aa).

The GXGXXG motif signature appears at 322 to 327; sequence GAGTLG. The Glycyl thioester intermediate role is filled by cysteine 502.

The protein belongs to the ATG7 family. As to quaternary structure, homodimer.

The protein resides in the cytoplasm. It localises to the preautophagosomal structure. Its function is as follows. E1-like activating enzyme involved in the 2 ubiquitin-like systems required for cytoplasm to vacuole transport (Cvt) and autophagy. Activates ATG12 for its conjugation with ATG5 and ATG8 for its conjugation with phosphatidylethanolamine. Both systems are needed for the ATG8 association to Cvt vesicles and autophagosomes membranes. Autophagy is essential for maintenance of amino acid levels and protein synthesis under nitrogen starvation. Required for selective autophagic degradation of the nucleus (nucleophagy) as well as for mitophagy which contributes to regulate mitochondrial quantity and quality by eliminating the mitochondria to a basal level to fulfill cellular energy requirements and preventing excess ROS production. Plays a role in the regulation of filamentous growth and chronological longevity. In Candida albicans (strain SC5314 / ATCC MYA-2876) (Yeast), this protein is Ubiquitin-like modifier-activating enzyme ATG7 (APG7).